The primary structure comprises 195 residues: ATP-dependent Clp protease proteolytic subunit (195 aa).

Serine 98 (nucleophile) is an active-site residue. Histidine 123 is a catalytic residue.

The protein belongs to the peptidase S14 family. As to quaternary structure, fourteen ClpP subunits assemble into 2 heptameric rings which stack back to back to give a disk-like structure with a central cavity, resembling the structure of eukaryotic proteasomes.

It localises to the cytoplasm. It catalyses the reaction Hydrolysis of proteins to small peptides in the presence of ATP and magnesium. alpha-casein is the usual test substrate. In the absence of ATP, only oligopeptides shorter than five residues are hydrolyzed (such as succinyl-Leu-Tyr-|-NHMec, and Leu-Tyr-Leu-|-Tyr-Trp, in which cleavage of the -Tyr-|-Leu- and -Tyr-|-Trp bonds also occurs).. In terms of biological role, cleaves peptides in various proteins in a process that requires ATP hydrolysis. Has a chymotrypsin-like activity. Plays a major role in the degradation of misfolded proteins. This chain is ATP-dependent Clp protease proteolytic subunit, found in Helicobacter pylori (strain J99 / ATCC 700824) (Campylobacter pylori J99).